The primary structure comprises 911 residues: Transcription factor E2F7 (911 aa).

S94 bears the Phosphoserine mark. The DNA-binding element occupies 141-210 (RKQKSLGLLC…VAKNQYSWHG (70 aa)). Disordered stretches follow at residues 239-281 (QKEL…ANSR), 409-433 (SFNS…PYRQ), and 565-706 (SPGS…SPLQ). Residues 243–257 (NPIDHKSGERRRDGC) show a composition bias toward basic and acidic residues. A DNA-binding region spans residues 281–366 (RKDKSLKIMS…GRKPAFKWIG (86 aa)). Position 409 is a phosphoserine (S409). Basic and acidic residues predominate over residues 415–424 (ASERTQRKVN). The segment covering 566–579 (PGSGSGSGSVGGGS) has biased composition (gly residues). The segment covering 599 to 621 (ERRLQEEEEEPATKRQCRDHEDG) has biased composition (basic and acidic residues). A compositionally biased stretch (polar residues) spans 669-687 (KATTNGFVSSEWGNPCSNT). A compositionally biased stretch (basic and acidic residues) spans 688 to 698 (EIEKPSEENES). At S840 the chain carries Phosphoserine. A disordered region spans residues 873–911 (FFKTPGSLGDPVLRRKERNQSRSSSSAQRRLEISSGGTD).

The protein belongs to the E2F/DP family. In terms of assembly, homodimer and heterodimer: mainly forms homodimers and, to a lesser extent, heterodimers with E2F8. Dimerization is important for DNA-binding. Interacts with HIF1A. Interacts with MN1.

It localises to the nucleus. Atypical E2F transcription factor that participates in various processes such as angiogenesis, polyploidization of specialized cells and DNA damage response. Mainly acts as a transcription repressor that binds DNA independently of DP proteins and specifically recognizes the E2 recognition site 5'-TTTC[CG]CGC-3'. Directly represses transcription of classical E2F transcription factors such as E2F1. Acts as a regulator of S-phase by recognizing and binding the E2-related site 5'-TTCCCGCC-3' and mediating repression of G1/S-regulated genes. Plays a key role in polyploidization of cells in placenta and liver by regulating the endocycle, probably by repressing genes promoting cytokinesis and antagonizing action of classical E2F proteins (E2F1, E2F2 and/or E2F3). Required for placental development by promoting polyploidization of trophoblast giant cells. Also involved in DNA damage response: up-regulated by p53/TP53 following genotoxic stress and acts as a downstream effector of p53/TP53-dependent repression by mediating repression of indirect p53/TP53 target genes involved in DNA replication. Acts as a promoter of sprouting angiogenesis, possibly by acting as a transcription activator: associates with HIF1A, recognizes and binds the VEGFA promoter, which is different from canonical E2 recognition site, and activates expression of the VEGFA gene. Acts as a negative regulator of keratinocyte differentiation. This is Transcription factor E2F7 (E2F7) from Bos taurus (Bovine).